The primary structure comprises 89 residues: Small ribosomal subunit protein uS15 (89 aa).

Belongs to the universal ribosomal protein uS15 family. In terms of assembly, part of the 30S ribosomal subunit. Forms a bridge to the 50S subunit in the 70S ribosome, contacting the 23S rRNA.

Its function is as follows. One of the primary rRNA binding proteins, it binds directly to 16S rRNA where it helps nucleate assembly of the platform of the 30S subunit by binding and bridging several RNA helices of the 16S rRNA. Forms an intersubunit bridge (bridge B4) with the 23S rRNA of the 50S subunit in the ribosome. This Desulfosudis oleivorans (strain DSM 6200 / JCM 39069 / Hxd3) (Desulfococcus oleovorans) protein is Small ribosomal subunit protein uS15.